The chain runs to 503 residues: MKAKVRILDIETGRFLAFISEEDAKNAKLHPGDLVKIETAKRTIYGDVVISKTINPGEIGVTKDILRSYTFSEGEVVNLVPSETPESVRYIRRKMNGQKLKKVEIEAIVKDIVNRKLRDIEISSFVTSLEINGLDMDEIAWLTTAMAETGDMLDIDRKPIMDVHSIGGVPGNKTNILVVPIVAAAGLTIPKTSSRAITSAAGTADVVEVLAPVTHSLDEIKRIVEKIGACLVWGGALNLAPADDLTIKAERALSIDPRGLMLASIMSKKYAMGSQYVLIDIPTGEGVKVEKVEDARSLAKDFIELGKRLGQYVETAITYGGQPIGHTVGPALEAKEALETIIEGKGPGSLVEKATGLAGILLEMGGVAPAGMGKKMAKEILESGKAYEKLKEIIEEQGGDPNIKPEDIPIGDKTYTFVAQTSGYITRIDNKAITAIARAAGAPEDKGAGIMLHVKVGEKVKERDPLFTVHAESGTRLDQAIIQARRMEPIRIEGMVLQRIGNI.

AMP is bound by residues glycine 168, 194 to 199 (SRAITS), and threonine 203. The Proton donor role is filled by aspartate 256. AMP is bound by residues serine 264 and lysine 288.

The protein belongs to the thymidine/pyrimidine-nucleoside phosphorylase family. Type 2 subfamily.

It carries out the reaction AMP + phosphate = alpha-D-ribose 1,5-bisphosphate + adenine. The enzyme catalyses CMP + phosphate = cytosine + alpha-D-ribose 1,5-bisphosphate. The catalysed reaction is UMP + phosphate = alpha-D-ribose 1,5-bisphosphate + uracil. Functionally, catalyzes the conversion of AMP and phosphate to adenine and ribose 1,5-bisphosphate (R15P). Exhibits phosphorylase activity toward CMP and UMP in addition to AMP. Functions in an archaeal AMP degradation pathway, together with R15P isomerase and RubisCO. The sequence is that of AMP phosphorylase from Thermococcus sibiricus (strain DSM 12597 / MM 739).